A 373-amino-acid chain; its full sequence is 3-isopropylmalate dehydrogenase (373 aa).

Residue 82–93 participates in NAD(+) binding; the sequence is GPKWGTGTVRPE. Arginine 100, arginine 110, arginine 139, and aspartate 231 together coordinate substrate. Positions 231, 256, and 260 each coordinate Mg(2+). 295 to 306 lines the NAD(+) pocket; that stretch reads GSAPDLPANKVN.

This sequence belongs to the isocitrate and isopropylmalate dehydrogenases family. In terms of assembly, homodimer. The cofactor is Mg(2+). Requires Mn(2+) as cofactor.

Its subcellular location is the cytoplasm. The enzyme catalyses (2R,3S)-3-isopropylmalate + NAD(+) = 4-methyl-2-oxopentanoate + CO2 + NADH. It functions in the pathway amino-acid biosynthesis; L-leucine biosynthesis; L-leucine from 3-methyl-2-oxobutanoate: step 3/4. Catalyzes the oxidation of 3-carboxy-2-hydroxy-4-methylpentanoate (3-isopropylmalate) to 3-carboxy-4-methyl-2-oxopentanoate. The product decarboxylates to 4-methyl-2 oxopentanoate. This is 3-isopropylmalate dehydrogenase (LEU2) from Candida albicans (Yeast).